Reading from the N-terminus, the 338-residue chain is 2,3-dihydroxybenzoate decarboxylase (338 aa).

The active site involves Cys251.

It belongs to the metallo-dependent hydrolases superfamily. In terms of assembly, homotetramer.

It carries out the reaction 2,3-dihydroxybenzoate + H(+) = catechol + CO2. Its pathway is aromatic compound metabolism; benzoate degradation via hydroxylation. Functionally, has an absolute substrate specificity for 2,3-DHBA. The protein is 2,3-dihydroxybenzoate decarboxylase of Aspergillus oryzae (strain ATCC 42149 / RIB 40) (Yellow koji mold).